The sequence spans 344 residues: Cytochrome c biogenesis protein CcsA (344 aa).

Transmembrane regions (helical) follow at residues 21-41, 45-65, 80-100, 106-126, 151-171, 252-272, 287-307, and 313-333; these read NVAF…AAFP, LLSE…AALL, LYES…LALH, WVGV…ALAL, VMLL…AFLI, LIGL…VWAN, WALI…TKGW, and ALLA…VNFL.

The protein belongs to the CcmF/CycK/Ccl1/NrfE/CcsA family. In terms of assembly, may interact with ccs1.

Its subcellular location is the cellular thylakoid membrane. Its function is as follows. Required during biogenesis of c-type cytochromes (cytochrome c6 and cytochrome f) at the step of heme attachment. The polypeptide is Cytochrome c biogenesis protein CcsA (Synechococcus sp. (strain JA-3-3Ab) (Cyanobacteria bacterium Yellowstone A-Prime)).